The sequence spans 1385 residues: Probable serine/threonine-protein kinase DDB_G0268876 (1385 aa).

The 251-residue stretch at 758–1008 (LELTKEIGRG…QQIITYLENL (251 aa)) folds into the Protein kinase domain. ATP is bound by residues 764–772 (IGRGVSGVV) and K785. Catalysis depends on D878, which acts as the Proton acceptor. Disordered regions lie at residues 1040 to 1074 (GGNS…ENKI), 1091 to 1266 (EVSK…SVGG), and 1287 to 1339 (ISSS…NNNN). The segment covering 1055 to 1073 (VSGSNNNESSTAVSLNENK) has biased composition (polar residues). The span at 1107-1144 (SSSTSSSPSTLSAPQSPVGSTSPMGSTSTSPISNNNNR) shows a compositional bias: low complexity. Over residues 1145–1162 (PTHDHQQPHQVKWERIVP) the composition is skewed to basic and acidic residues. Low complexity-rich tracts occupy residues 1189 to 1232 (NNNN…SSGI), 1242 to 1266 (FLSS…SVGG), and 1295 to 1339 (NNNN…NNNN).

Belongs to the protein kinase superfamily. TKL Ser/Thr protein kinase family.

It carries out the reaction L-seryl-[protein] + ATP = O-phospho-L-seryl-[protein] + ADP + H(+). It catalyses the reaction L-threonyl-[protein] + ATP = O-phospho-L-threonyl-[protein] + ADP + H(+). The protein is Probable serine/threonine-protein kinase DDB_G0268876 of Dictyostelium discoideum (Social amoeba).